Consider the following 220-residue polypeptide: Small ribosomal subunit protein mS42 (220 aa).

It belongs to the mitochondrion-specific ribosomal protein mS42 family. In terms of assembly, component of the mitochondrial small ribosomal subunit (mt-SSU). Mature yeast 74S mitochondrial ribosomes consist of a small (37S) and a large (54S) subunit. The 37S small subunit contains a 15S ribosomal RNA (15S mt-rRNA) and at least 32 different proteins. The 54S large subunit contains a 21S rRNA (21S mt-rRNA) and at least 45 different proteins. mS43 forms a dimer with mS42, building a large protuberance adjacent to the mRNA channel exit in the mt-SSU body.

The protein resides in the mitochondrion. Functionally, component of the mitochondrial ribosome (mitoribosome), a dedicated translation machinery responsible for the synthesis of mitochondrial genome-encoded proteins, including at least some of the essential transmembrane subunits of the mitochondrial respiratory chain. The mitoribosomes are attached to the mitochondrial inner membrane and translation products are cotranslationally integrated into the membrane. The sequence is that of Small ribosomal subunit protein mS42 from Schizosaccharomyces pombe (strain 972 / ATCC 24843) (Fission yeast).